Here is a 580-residue protein sequence, read N- to C-terminus: Membrane protein insertase YidC (580 aa).

The next 6 helical transmembrane spans lie at 5-25 (SVTGLALIALIMIVWLQFMSP), 259-279 (KYFVAALIPAGPTGGFYLDGS), 362-382 (GLIIIIFAFLIKLVTYPLSLA), 427-447 (LGGCLPVVLQMPLLFAMFYVF), 477-497 (IPMYGDHIALMPILMAGTVFV), and 513-533 (IMLYMFPAMMLLFFNNMPSGL).

It belongs to the OXA1/ALB3/YidC family. Type 1 subfamily. As to quaternary structure, interacts with the Sec translocase complex via SecD. Specifically interacts with transmembrane segments of nascent integral membrane proteins during membrane integration.

It is found in the cell inner membrane. Functionally, required for the insertion and/or proper folding and/or complex formation of integral membrane proteins into the membrane. Involved in integration of membrane proteins that insert both dependently and independently of the Sec translocase complex, as well as at least some lipoproteins. Aids folding of multispanning membrane proteins. The protein is Membrane protein insertase YidC of Chlorobium phaeovibrioides (strain DSM 265 / 1930) (Prosthecochloris vibrioformis (strain DSM 265)).